Consider the following 22-residue polypeptide: Brevinin-1OKc (22 aa).

Lysine 22 is modified (lysine amide).

Expressed by the skin glands.

Its subcellular location is the secreted. Its function is as follows. Antimicrobial peptide. Active against Gram-negative bacterium E.coli (MIC=6 uM) and against Gram-positive bacterium S.aureus (MIC=12.5 uM). This is Brevinin-1OKc from Nidirana okinavana (Kampira Falls frog).